A 54-amino-acid polypeptide reads, in one-letter code: Ovomucoid (54 aa).

The 51-residue stretch at 4 to 54 (VDCSGYPTHACTLELKPLCGSDNQTYSNKCGFCNAVAQSNGTLTLSHFGKC) folds into the Kazal-like domain. Cystine bridges form between Cys-6-Cys-36, Cys-14-Cys-33, and Cys-22-Cys-54. Asn-43 is a glycosylation site (N-linked (GlcNAc...) asparagine).

The protein resides in the secreted. The sequence is that of Ovomucoid from Leipoa ocellata (Malleefowl).